Reading from the N-terminus, the 810-residue chain is Type I restriction enzyme EcoAI endonuclease subunit (810 aa).

The region spanning 183–343 (EAVSNGQNRV…TDYFGDPVYV (161 aa)) is the Helicase ATP-binding domain. An ATP-binding site is contributed by 197–203 (ATGTGKT). In terms of domain architecture, Helicase C-terminal spans 412–575 (TITDYLKRTN…DIADPESDFE (164 aa)). Positions 578–588 (LEEISEHDEEQ) are enriched in acidic residues. Positions 578-608 (LEEISEHDEEQVTGVDEPPAPPYQVTDTDDV) are disordered.

The protein belongs to the HsdR family. The type I restriction/modification system is composed of three polypeptides R, M and S. The restriction enzyme has stoichiometry R(2)M(2)S(1) while the methyltransferase is M(2)S(1).

The enzyme catalyses Endonucleolytic cleavage of DNA to give random double-stranded fragments with terminal 5'-phosphates, ATP is simultaneously hydrolyzed.. Functionally, the subtype B restriction (R) subunit of a type I restriction enzyme that recognizes 5'-GAGN(7)GTCA-3' and cleaves a random distance away. Subunit R is required for both nuclease and ATPase activities, but not for modification. After locating a non-methylated recognition site, the enzyme complex serves as a molecular motor that translocates DNA in an ATP-dependent manner until a collision occurs that triggers cleavage. This chain is Type I restriction enzyme EcoAI endonuclease subunit, found in Escherichia coli.